An 81-amino-acid polypeptide reads, in one-letter code: Small ribosomal subunit protein bS16 (81 aa).

The protein belongs to the bacterial ribosomal protein bS16 family.

In Nautilia profundicola (strain ATCC BAA-1463 / DSM 18972 / AmH), this protein is Small ribosomal subunit protein bS16.